The following is a 125-amino-acid chain: Large ribosomal subunit protein bL17 (125 aa).

Belongs to the bacterial ribosomal protein bL17 family. As to quaternary structure, part of the 50S ribosomal subunit. Contacts protein L32.

This is Large ribosomal subunit protein bL17 from Blochmanniella pennsylvanica (strain BPEN).